The following is a 68-amino-acid chain: Large ribosomal subunit protein uL29 (68 aa).

Belongs to the universal ribosomal protein uL29 family.

The chain is Large ribosomal subunit protein uL29 from Methanobrevibacter smithii (strain ATCC 35061 / DSM 861 / OCM 144 / PS).